The following is a 533-amino-acid chain: Flavin-dependent halogenase gsfI (533 aa).

FAD-binding residues include Gly14, Gly17, and Glu47. Positions 331 and 332 each coordinate chloride.

It belongs to the flavin-dependent halogenase family.

The enzyme catalyses griseophenone C + FADH2 + chloride + O2 = griseophenone B + FAD + 2 H2O + H(+). The protein operates within secondary metabolite biosynthesis; terpenoid biosynthesis. In terms of biological role, flavin-dependent halogenase; part of the gene cluster that mediates the biosynthesis of griseofulvin, an important antifungal drug that has been in use for a long time for treating dermatophyte infections. The first step of the pathway is the formation of the heptaketide backbone by gsfA which is initiated by priming with acetyl-CoA, followed by sequential condensations of 6 malonyl-CoA units. The resulting benzophenone can undergo a spontaneous dehydration to form norlichexanthone. However, the true precursor for the griseofulvin biosynthesis is not norlichexanthone, but the heptaketide benzophenone that is O-methylated at 3-OH by gsfB to produce griseophenone D which is further methylated at 9-OH by gsfC to yield griseophenone C. Griseophenone C is then substrate of halogenase gsfI which is responsible for the regio-specific chlorination at the C13 position to form griseophenone B. The cytochrome P450 gsfF catalyzes the coupling of orcinol and phloroglucinol rings in griseophenone B to form desmethyl-dehydrogriseofulvin A which is further methylated at 5-OH by gsfD to yield dehydrogriseofulvin. Finally, gsfE performs stereospecific reduction of enone 18 of dehydrogriseofulvin to afford the final product griseofulvin. The chain is Flavin-dependent halogenase gsfI from Penicillium aethiopicum.